Here is a 180-residue protein sequence, read N- to C-terminus: Large ribosomal subunit protein uL5 (180 aa).

The protein belongs to the universal ribosomal protein uL5 family. Part of the 50S ribosomal subunit; part of the 5S rRNA/L5/L18/L25 subcomplex. Contacts the 5S rRNA and the P site tRNA. Forms a bridge to the 30S subunit in the 70S ribosome.

Its function is as follows. This is one of the proteins that bind and probably mediate the attachment of the 5S RNA into the large ribosomal subunit, where it forms part of the central protuberance. In the 70S ribosome it contacts protein S13 of the 30S subunit (bridge B1b), connecting the 2 subunits; this bridge is implicated in subunit movement. Contacts the P site tRNA; the 5S rRNA and some of its associated proteins might help stabilize positioning of ribosome-bound tRNAs. The chain is Large ribosomal subunit protein uL5 from Clostridium acetobutylicum (strain ATCC 824 / DSM 792 / JCM 1419 / IAM 19013 / LMG 5710 / NBRC 13948 / NRRL B-527 / VKM B-1787 / 2291 / W).